The primary structure comprises 359 residues: Cytohesin-interacting protein (359 aa).

The region spanning 77–166 (LVTVEKQDNE…LLTIETLNGT (90 aa)) is the PDZ domain. The interval 166-188 (TMILKRTELEAKLQVLKQTLKQK) is interaction with CYTH1. Residues 166–188 (TMILKRTELEAKLQVLKQTLKQK) adopt a coiled-coil conformation.

Interacts with CYTH1 and SNX27. In terms of tissue distribution, expressed in lymph nodes, thymus, spleen, lung, peripheral blood leukocytes and bone marrow.

The protein localises to the cytoplasm. It is found in the early endosome. In terms of biological role, by its binding to cytohesin-1 (CYTH1), it modifies activation of ARFs by CYTH1 and its precise function may be to sequester CYTH1 in the cytoplasm. This chain is Cytohesin-interacting protein (CYTIP), found in Homo sapiens (Human).